The chain runs to 146 residues: uncharacterized protein (146 aa).

The helical transmembrane segment at 7–27 (FVLSITIVLVILIIIAFIWYN) threads the bilayer.

The protein belongs to the asfivirus E146L family.

Its subcellular location is the host membrane. It is found in the virion. This is an uncharacterized protein from Ornithodoros (relapsing fever ticks).